The following is a 46-amino-acid chain: Spectrin alpha chain, non-erythrocytic 1 (46 aa).

6 Spectrin repeats span residues 1–5 (AQLAD), 7–14 (FHLQQFFR), 15–20 (SQLLGS), 21–26 (AHEVQR), 27–35 (LAQFVEHWK), and 39–46 (DLFLTFAK).

This sequence belongs to the spectrin family. In terms of assembly, associates with the gamma-tubulin complex in brain, but not in kidney, liver, sperm, or uterus. Like erythrocyte spectrin, the spectrin-like proteins are capable of forming dimers which can further associate to tetramers. Interacts with isoform 1 of ACP1. Interacts with CALM and EMD. Interacts (via C-terminal spectrin repeats) with TRPC4. Identified in a complex with ACTN4, CASK, IQGAP1, MAGI2, NPHS1 and SPTBN1. Interacts with CLN3; this interaction regulates the fodrin localization at the plasma membrane.

The protein localises to the cytoplasm. It localises to the cytoskeleton. The protein resides in the cell cortex. Its function is as follows. Fodrin, which seems to be involved in secretion, interacts with calmodulin in a calcium-dependent manner and is thus candidate for the calcium-dependent movement of the cytoskeleton at the membrane. The sequence is that of Spectrin alpha chain, non-erythrocytic 1 (SPTAN1) from Capra hircus (Goat).